Consider the following 116-residue polypeptide: uncharacterized protein (116 aa).

The N-terminal stretch at 1–19 is a signal peptide; the sequence is MRWDVIILYAISRPYATRR. Residues 18–50 form a disordered region; the sequence is RRTGSHTHPRDSRYIAANQRRPPSACRVGPSPA.

This is an uncharacterized protein from Saccharomyces cerevisiae (strain ATCC 204508 / S288c) (Baker's yeast).